The following is a 276-amino-acid chain: Syntaxin-12 (276 aa).

Ser2 carries the post-translational modification N-acetylserine. Residues 2–248 (SYGPLDMYRN…RAAYYQKKSR (247 aa)) lie on the Cytoplasmic side of the membrane. Residues 33–131 (IQRISQATAQ…RRVSEKEKES (99 aa)) are a coiled coil. Phosphoserine is present on residues Ser139, Ser142, Ser218, and Ser225. Residues 178–240 (LELIKERETA…ERATEQLQRA (63 aa)) form the t-SNARE coiled-coil homology domain. The helical; Anchor for type IV membrane protein transmembrane segment at 249 to 269 (KKMCILVLVLSVIILILGLII) threads the bilayer. Topologically, residues 270-276 (WLVYKTK) are vesicular.

Belongs to the syntaxin family. As to quaternary structure, interacts with NAPA and SNAP23. Identified in a complex containing STX6, STX12, VAMP4 and VTI1A. Associates with the BLOC-1 complex. Interacts with BLOC1S6. Interacts with GRIPAP1. Forms a complex with GRIP1, GRIA2 and NSG1; controls the intracellular fate of AMPAR and the endosomal sorting of the GRIA2 subunit toward recycling and membrane targeting. Interacts with NSG1. Interacts with TPC1. Interacts (via N-terminus) with VPS13B.

The protein localises to the endosome membrane. Its subcellular location is the golgi apparatus membrane. The protein resides in the endomembrane system. It localises to the early endosome membrane. It is found in the recycling endosome membrane. SNARE promoting fusion of transport vesicles with target membranes. Together with SNARE STX6, promotes movement of vesicles from endosomes to the cell membrane, and may therefore function in the endocytic recycling pathway. Through complex formation with GRIP1, GRIA2 and NSG1 controls the intracellular fate of AMPAR and the endosomal sorting of the GRIA2 subunit toward recycling and membrane targeting. The sequence is that of Syntaxin-12 (STX12) from Homo sapiens (Human).